The following is a 120-amino-acid chain: uncharacterized protein (120 aa).

A helical membrane pass occupies residues 93 to 109 (LCVGISTTMIIQVLFLL).

Its subcellular location is the membrane. This is an uncharacterized protein from Saccharomyces cerevisiae (strain ATCC 204508 / S288c) (Baker's yeast).